Here is a 145-residue protein sequence, read N- to C-terminus: Globin-1 (145 aa).

One can recognise a Globin domain in the interval 1 to 145 (GISADQAKAL…VIVPGMKAGY (145 aa)). Heme b contacts are provided by H63 and H92.

The protein belongs to the globin family. As to quaternary structure, monomer.

The sequence is that of Globin-1 from Liolophura japonica (Chiton).